Reading from the N-terminus, the 150-residue chain is uncharacterized protein (150 aa).

The span at 1–19 shows a compositional bias: low complexity; sequence MNDDSSSSSSGDSSDGSSG. Disordered regions lie at residues 1–21 and 85–131; these read MNDD…SGTT and EPEA…AYPE. Residues 106–115 show a composition bias toward pro residues; it reads RPPPTEPPTV.

This is an uncharacterized protein from Schizosaccharomyces pombe (strain 972 / ATCC 24843) (Fission yeast).